The following is a 924-amino-acid chain: Inositol polyphosphate 4-phosphatase type II (924 aa).

Over residues 1–13 (MEIKEEGASEEGQ) the composition is skewed to basic and acidic residues. 3 disordered regions span residues 1-24 (MEIKEEGASEEGQHFLPTAQANDP), 481-516 (ILKKPPSPKSSTEESSPQDQPPVMRGQDSIPHHSDY), and 546-570 (DGGSEGSGGNNDGEKEPSLTDAIPS). One can recognise a C2 domain in the interval 23–165 (DPGDCQFTSI…LKSKEQLLVL (143 aa)).

This sequence belongs to the inositol 3,4-bisphosphate 4-phosphatase family. Widely expressed with highest levels occurring in the skeletal muscle and heart.

It catalyses the reaction a 1,2-diacyl-sn-glycero-3-phospho-(1D-myo-inositol-3,4-bisphosphate) + H2O = a 1,2-diacyl-sn-glycero-3-phospho-(1D-myo-inositol-3-phosphate) + phosphate. It carries out the reaction 1D-myo-inositol 1,3,4-trisphosphate + H2O = 1D-myo-inositol 1,3-bisphosphate + phosphate. The catalysed reaction is 1D-myo-inositol 3,4-bisphosphate + H2O = 1D-myo-inositol 3-phosphate + phosphate. Its pathway is signal transduction; phosphatidylinositol signaling pathway. Strongly inhibited by inositol hexakisphosphate. Catalyzes the hydrolysis of the 4-position phosphate of phosphatidylinositol 3,4-bisphosphate, inositol 1,3,4-trisphosphate and inositol 3,4-trisphosphate. Plays a role in the late stages of macropinocytosis by dephosphorylating phosphatidylinositol 3,4-bisphosphate in membrane ruffles. The lipid phosphatase activity is critical for tumor suppressor function. Antagonizes the PI3K-AKT/PKB signaling pathway by dephosphorylating phosphoinositides and thereby modulating cell cycle progression and cell survival. The protein is Inositol polyphosphate 4-phosphatase type II (INPP4B) of Homo sapiens (Human).